The following is a 99-amino-acid chain: Phosphoribosyl-ATP pyrophosphatase (99 aa).

It belongs to the PRA-PH family.

It is found in the cytoplasm. It catalyses the reaction 1-(5-phospho-beta-D-ribosyl)-ATP + H2O = 1-(5-phospho-beta-D-ribosyl)-5'-AMP + diphosphate + H(+). It functions in the pathway amino-acid biosynthesis; L-histidine biosynthesis; L-histidine from 5-phospho-alpha-D-ribose 1-diphosphate: step 2/9. This Methanosphaerula palustris (strain ATCC BAA-1556 / DSM 19958 / E1-9c) protein is Phosphoribosyl-ATP pyrophosphatase.